The sequence spans 236 residues: Flagellar L-ring protein (236 aa).

A signal peptide spans 1 to 16 (MRMQLTAVLAASLLAG). The N-palmitoyl cysteine moiety is linked to residue Cys-17. Cys-17 carries the S-diacylglycerol cysteine lipid modification.

The protein belongs to the FlgH family. The basal body constitutes a major portion of the flagellar organelle and consists of four rings (L,P,S, and M) mounted on a central rod.

The protein localises to the cell outer membrane. Its subcellular location is the bacterial flagellum basal body. Its function is as follows. Assembles around the rod to form the L-ring and probably protects the motor/basal body from shearing forces during rotation. This Sinorhizobium fredii (strain NBRC 101917 / NGR234) protein is Flagellar L-ring protein.